Consider the following 337-residue polypeptide: Adenosine deaminase (337 aa).

Residues histidine 12 and histidine 14 each contribute to the Zn(2+) site. Residues histidine 14, aspartate 16, and glycine 170 each contribute to the substrate site. Histidine 197 contributes to the Zn(2+) binding site. Glutamate 200 functions as the Proton donor in the catalytic mechanism. Aspartate 278 provides a ligand contact to Zn(2+). Residue aspartate 279 participates in substrate binding.

Belongs to the metallo-dependent hydrolases superfamily. Adenosine and AMP deaminases family. Adenosine deaminase subfamily. Zn(2+) serves as cofactor.

The catalysed reaction is adenosine + H2O + H(+) = inosine + NH4(+). It catalyses the reaction 2'-deoxyadenosine + H2O + H(+) = 2'-deoxyinosine + NH4(+). Functionally, catalyzes the hydrolytic deamination of adenosine and 2-deoxyadenosine. This Pectobacterium atrosepticum (strain SCRI 1043 / ATCC BAA-672) (Erwinia carotovora subsp. atroseptica) protein is Adenosine deaminase.